The primary structure comprises 427 residues: MGPSHIPPLTYKVVAECSVSKARAGLMTLRHSEVNTPVFMPVGTQGTLKGIVPDQLIELNCQILLGNTYHLGLRPGIETLKKAGGLHKFMGWPRAILTDSGGFQMVSLLQLAEIDEHGVNFRSPFDNSQCMLTPEHSIEIQNAIGGDIMMQLDDVVKTTTTGPRVEEAMERTIRWVDRCIEAHARDDDQSLFPIVQGGLDVPLRQRCVSALMERQVRGFAVGGLSGGESKHDFWRMVDVCTGYLPKDKPRYLMGVGFAADLVVCVALGIDMFDCVFPTRTARFGCALVDSGQLNLKQPKYKLDMEPIDKDCDCSTCRRYTRSYLHHIATNESVSSSLLSIHNVAYQLRLMRSMREAIQRDEFPQFVADFMARHFKAEPVPAWIREALSAVNIQLPADPERIDEQDQKPKTEKRRETEDVAEEQVASS.

D99 functions as the Proton acceptor in the catalytic mechanism. Residues 99 to 103, D153, Q196, and G223 contribute to the substrate site; that span reads DSGGF. The tract at residues 254-260 is RNA binding; the sequence is GVGFAAD. D273 functions as the Nucleophile in the catalytic mechanism. Residues 278 to 282 are RNA binding; important for wobble base 34 recognition; sequence TRTAR. C311, C313, C316, and H341 together coordinate Zn(2+). The interval 395–427 is disordered; the sequence is PADPERIDEQDQKPKTEKRRETEDVAEEQVASS. Positions 397-417 are enriched in basic and acidic residues; it reads DPERIDEQDQKPKTEKRRETE.

It belongs to the queuine tRNA-ribosyltransferase family. Heterodimer of a catalytic subunit and an accessory subunit. Zn(2+) is required as a cofactor.

Its subcellular location is the cytoplasm. It carries out the reaction guanosine(34) in tRNA + queuine = queuosine(34) in tRNA + guanine. Catalytic subunit of the queuine tRNA-ribosyltransferase (TGT) that catalyzes the base-exchange of a guanine (G) residue with queuine (Q) at position 34 (anticodon wobble position) in tRNAs with GU(N) anticodons (tRNA-Asp, -Asn, -His and -Tyr), resulting in the hypermodified nucleoside queuosine (7-(((4,5-cis-dihydroxy-2-cyclopenten-1-yl)amino)methyl)-7-deazaguanosine). Catalysis occurs through a double-displacement mechanism. The nucleophile active site attacks the C1' of nucleotide 34 to detach the guanine base from the RNA, forming a covalent enzyme-RNA intermediate. The proton acceptor active site deprotonates the incoming queuine, allowing a nucleophilic attack on the C1' of the ribose to form the product. This is Queuine tRNA-ribosyltransferase catalytic subunit (Tgt) from Drosophila melanogaster (Fruit fly).